The chain runs to 919 residues: Translation initiation factor IF-2 (919 aa).

Basic and acidic residues predominate over residues 93–107 (MGKALPEEVPEKIAP). Disordered stretches follow at residues 93-145 (MGKA…PAEP) and 158-279 (KIQP…RKGE). Residues 136–145 (LAPPEKPAEP) are compositionally biased toward pro residues. A compositionally biased stretch (basic and acidic residues) spans 158–171 (KIQPPEKFAEEPLK). Positions 172-193 (KPAVIEPEKAAAAPKAVPGEAK) are enriched in low complexity. Composition is skewed to basic and acidic residues over residues 194–203 (PLPRTERVQE) and 256–279 (GAPKTEAEKPRKKIKLPDETRKGE). Residues 420-589 (PRAPVVTIMG…LLQADVLELK (170 aa)) form the tr-type G domain. The tract at residues 429 to 436 (GHVDHGKT) is G1. Position 429–436 (429–436 (GHVDHGKT)) interacts with GTP. Residues 454 to 458 (GITQA) form a G2 region. The tract at residues 475–478 (DTPG) is G3. GTP contacts are provided by residues 475 to 479 (DTPGH) and 529 to 532 (NKID). The tract at residues 529–532 (NKID) is G4. Positions 565–567 (SAK) are G5.

The protein belongs to the TRAFAC class translation factor GTPase superfamily. Classic translation factor GTPase family. IF-2 subfamily.

Its subcellular location is the cytoplasm. One of the essential components for the initiation of protein synthesis. Protects formylmethionyl-tRNA from spontaneous hydrolysis and promotes its binding to the 30S ribosomal subunits. Also involved in the hydrolysis of GTP during the formation of the 70S ribosomal complex. This chain is Translation initiation factor IF-2, found in Syntrophus aciditrophicus (strain SB).